Consider the following 416-residue polypeptide: Tyrosine--tRNA ligase (416 aa).

Tyrosine 40 contributes to the L-tyrosine binding site. The 'HIGH' region signature appears at 45 to 54; the sequence is ATAASLHVGH. L-tyrosine is bound by residues tyrosine 177 and glutamine 181. The 'KMSKS' region motif lies at 237-241; sequence KMGKS. Residue lysine 240 coordinates ATP. An S4 RNA-binding domain is found at 351–416; that stretch reads LSVAHFLVAA…RKKHKLVRLS (66 aa).

The protein belongs to the class-I aminoacyl-tRNA synthetase family. TyrS type 1 subfamily. In terms of assembly, homodimer.

It is found in the cytoplasm. It catalyses the reaction tRNA(Tyr) + L-tyrosine + ATP = L-tyrosyl-tRNA(Tyr) + AMP + diphosphate + H(+). Its function is as follows. Catalyzes the attachment of tyrosine to tRNA(Tyr) in a two-step reaction: tyrosine is first activated by ATP to form Tyr-AMP and then transferred to the acceptor end of tRNA(Tyr). This chain is Tyrosine--tRNA ligase, found in Cereibacter sphaeroides (strain ATCC 17029 / ATH 2.4.9) (Rhodobacter sphaeroides).